A 157-amino-acid chain; its full sequence is uncharacterized protein (157 aa).

Residues 6–157 (HDELFQAIQQ…AFFNLWIKYM (152 aa)) enclose the HTH marR-type domain. Residues 66 to 89 (NSFLASRLHISKAAVSKAVHALLK) constitute a DNA-binding region (H-T-H motif).

Its subcellular location is the cytoplasm. This is an uncharacterized protein from Bacillus subtilis (strain 168).